The following is a 266-amino-acid chain: Trehalose-6-phosphate phosphatase (266 aa).

Catalysis depends on aspartate 20, which acts as the Nucleophile. Positions 20, 22, and 198 each coordinate Mg(2+). Residue 20-22 (DLD) coordinates substrate.

This sequence belongs to the trehalose phosphatase family. Mg(2+) is required as a cofactor. The cofactor is Mn(2+). Requires Co(2+) as cofactor. It depends on Zn(2+) as a cofactor.

The catalysed reaction is alpha,alpha-trehalose 6-phosphate + H2O = alpha,alpha-trehalose + phosphate. It functions in the pathway glycan biosynthesis; trehalose biosynthesis. Removes the phosphate from trehalose 6-phosphate (Tre6P) to produce free trehalose. Also catalyzes the dephosphorylation of glucose-6-phosphate (Glu6P) and 2-deoxyglucose-6-phosphate (2dGlu6P). This Escherichia coli (strain K12) protein is Trehalose-6-phosphate phosphatase (otsB).